Reading from the N-terminus, the 871-residue chain is Coatomer subunit gamma-2 (871 aa).

Positions Met1–Glu11 are enriched in basic and acidic residues. The segment at Met1–Arg20 is disordered. HEAT repeat units follow at residues Thr64 to Asp101, Arg283 to Ser320, Ala321 to Ser355, Ser356 to Arg392, Ser395 to Glu430, and Pro467 to Asn504. Phosphothreonine is present on Thr594.

This sequence belongs to the COPG family. Oligomeric complex. Binds to CDC42. Interacts with JAGN1. Interacts with TMED10 (via cytoplasmic domain).

Its subcellular location is the cytoplasm. It localises to the cytosol. The protein resides in the golgi apparatus membrane. The protein localises to the cytoplasmic vesicle. It is found in the COPI-coated vesicle membrane. The coatomer is a cytosolic protein complex that binds to dilysine motifs and reversibly associates with Golgi non-clathrin-coated vesicles, which further mediate biosynthetic protein transport from the ER, via the Golgi up to the trans Golgi network. Coatomer complex is required for budding from Golgi membranes, and is essential for the retrograde Golgi-to-ER transport of dilysine-tagged proteins. In mammals, the coatomer can only be recruited by membranes associated to ADP-ribosylation factors (ARFs), which are small GTP-binding proteins; the complex also influences the Golgi structural integrity, as well as the processing, activity, and endocytic recycling of LDL receptors. This is Coatomer subunit gamma-2 (COPG2) from Bos taurus (Bovine).